A 186-amino-acid chain; its full sequence is Der GTPase-activating protein YihI (186 aa).

The tract at residues 42-77 (KAREDKKKRKHKGLASGSRHSAVEEKANKLQNEIKD) is disordered. Residues 62-77 (SAVEEKANKLQNEIKD) are compositionally biased toward basic and acidic residues.

This sequence belongs to the YihI family. Interacts with Der.

Functionally, a GTPase-activating protein (GAP) that modifies Der/EngA GTPase function. May play a role in ribosome biogenesis. This is Der GTPase-activating protein YihI from Haemophilus influenzae (strain ATCC 51907 / DSM 11121 / KW20 / Rd).